Reading from the N-terminus, the 123-residue chain is Large ribosomal subunit protein uL18 (123 aa).

This sequence belongs to the universal ribosomal protein uL18 family. As to quaternary structure, part of the 50S ribosomal subunit; part of the 5S rRNA/L5/L18/L25 subcomplex. Contacts the 5S and 23S rRNAs.

This is one of the proteins that bind and probably mediate the attachment of the 5S RNA into the large ribosomal subunit, where it forms part of the central protuberance. The sequence is that of Large ribosomal subunit protein uL18 from Wolbachia pipientis subsp. Culex pipiens (strain wPip).